The chain runs to 87 residues: Sec-independent protein translocase protein TatA (87 aa).

A helical transmembrane segment spans residues 1-21; that stretch reads MGSFSITHWLILLVVVVVVFG. Residues 56–87 are disordered; that stretch reads VLDHDAGTNPPNITGTQSDTTSANKVDDTHNV. Residues 64–79 show a composition bias toward polar residues; that stretch reads NPPNITGTQSDTTSAN.

This sequence belongs to the TatA/E family. As to quaternary structure, the Tat system comprises two distinct complexes: a TatABC complex, containing multiple copies of TatA, TatB and TatC subunits, and a separate TatA complex, containing only TatA subunits. Substrates initially bind to the TatABC complex, which probably triggers association of the separate TatA complex to form the active translocon.

It localises to the cell inner membrane. Its function is as follows. Part of the twin-arginine translocation (Tat) system that transports large folded proteins containing a characteristic twin-arginine motif in their signal peptide across membranes. TatA could form the protein-conducting channel of the Tat system. The polypeptide is Sec-independent protein translocase protein TatA (Psychrobacter arcticus (strain DSM 17307 / VKM B-2377 / 273-4)).